Here is a 724-residue protein sequence, read N- to C-terminus: MNRGPPNPRMFKFQPNPKVKNRFQDEADLRSLRSFKTDFSNYLASDTNFLNVAEIMTSYAYGESNNANEKEIQCDLLTENGGIEIDPTRLSYRERIRWHLQQFCYKTSSHGIPMLGQAPNSLYRAVWVFLLLICAIQFINQAVAVIQKYQKMDKITDIQLKFDTAPFPAITLCNLNPYKDSVIRSHDSISKILGVFKSVMKKAGDSSAEASDDGVEYDMDGITIQAKRRKRGAGEKGTFEPANSACECDEEDGSNECEEKSTEKPSSDNDMCICAFDRQTNDAWPCHRREQWTNTTCQACDEHYLCSKKAKKGTKRSEIKKEPCICESKGLFCIKHEHAALVLNLWEYFGDTEEFSDISTEEREALGFGNMTDEVAIVTKAKENIIFAMSASEEQRILMSQAKHNLIHKCSFNGKPCDIDKDFELVADPTFGNCFVFNHDREIFKSSVRAGPQYGLRVMLFVNASDYLPTSEAVGIRLTIHDKDDFPFPDTFGYSAPTGYISSFGMRMKKMSRLPAPYGDCVEDGTTSNYIYKGYAYSTEGCYRTCFQELIIDRCGCSDPRFPSIGGVQPCQVFNKNHRECLEKHTHQIGEIHGSFKCRCQQPCNQTIYTTSYSEAIWPSQALNISLGHCEKEAEECNEEYKENAAMLEVFYEALNFEVLAESEAYGIVKMMADFGGHLGLWSGVSVMTCCEFVCLVLELLYMAVTHHITQERIRRRENAANEF.

The Cytoplasmic portion of the chain corresponds to 1 to 125; sequence MNRGPPNPRM…GQAPNSLYRA (125 aa). The chain crosses the membrane as a helical span at residues 126 to 146; the sequence is VWVFLLLICAIQFINQAVAVI. Over 147–684 the chain is Extracellular; it reads QKYQKMDKIT…FGGHLGLWSG (538 aa). Residues asparagine 294, asparagine 370, asparagine 463, asparagine 605, and asparagine 624 are each glycosylated (N-linked (GlcNAc...) asparagine). The helical transmembrane segment at 685–705 threads the bilayer; sequence VSVMTCCEFVCLVLELLYMAV. The Cytoplasmic segment spans residues 706-724; that stretch reads THHITQERIRRRENAANEF.

The protein belongs to the amiloride-sensitive sodium channel (TC 1.A.6) family. In terms of assembly, the channel is probably composed of at least the mec-2, mec-4, mec-6 and mec-10 subunits.

Its subcellular location is the cell membrane. Its function is as follows. Amiloride-sensitive sodium channel subunit required for mechanosensory transduction (touch sensitivity). Negatively regulates the turning step of male mating behavior. In Caenorhabditis briggsae, this protein is Degenerin mec-10.